The following is a 151-amino-acid chain: Putative pre-16S rRNA nuclease (151 aa).

This sequence belongs to the YqgF nuclease family.

The protein localises to the cytoplasm. Its function is as follows. Could be a nuclease involved in processing of the 5'-end of pre-16S rRNA. The sequence is that of Putative pre-16S rRNA nuclease from Prochlorococcus marinus subsp. pastoris (strain CCMP1986 / NIES-2087 / MED4).